Here is an 888-residue protein sequence, read N- to C-terminus: Bifunctional lysine-specific demethylase and histidyl-hydroxylase NO66 (888 aa).

3 disordered regions span residues Ala-83 to Ser-157, Ser-187 to Ala-208, and Asn-261 to Ser-446. A compositionally biased stretch (basic and acidic residues) spans Arg-98–Glu-108. The span at Glu-116–Lys-139 shows a compositional bias: polar residues. The segment covering Phe-192–Asp-207 has biased composition (acidic residues). Basic and acidic residues predominate over residues Val-273–Pro-284. Positions Lys-392–Thr-403 are enriched in low complexity. Basic and acidic residues predominate over residues Asn-404 to Asn-429. Residues Asn-430 to Lys-444 are compositionally biased toward low complexity. The 146-residue stretch at Cys-564–Val-709 folds into the JmjC domain. Fe cation is bound by residues His-610, Asp-612, and His-675.

The protein belongs to the ROX family. NO66 subfamily. It depends on Fe(2+) as a cofactor.

It localises to the nucleus. The enzyme catalyses N(6),N(6)-dimethyl-L-lysyl(36)-[histone H3] + 2 2-oxoglutarate + 2 O2 = L-lysyl(36)-[histone H3] + 2 formaldehyde + 2 succinate + 2 CO2. Its function is as follows. Oxygenase that can act as both a histone lysine demethylase and a ribosomal histidine hydroxylase. Specifically demethylates 'Lys-4' (H3K4me) and 'Lys-36' (H3K36me) of histone H3, thereby playing a central role in histone code. In Drosophila mojavensis (Fruit fly), this protein is Bifunctional lysine-specific demethylase and histidyl-hydroxylase NO66.